The sequence spans 120 residues: MAKDIEATERRKARVRRSLRARAYGKPRLSVFRSSKQIYCQIIDDGEGKTLVAASSLEKANREGLKTGATVEAAKIIGKLIAERAVQAGIKDVIFDRGAYMYHGRVKALADGAREGGLNF.

The protein belongs to the universal ribosomal protein uL18 family. In terms of assembly, part of the 50S ribosomal subunit; part of the 5S rRNA/L5/L18/L25 subcomplex. Contacts the 5S and 23S rRNAs.

This is one of the proteins that bind and probably mediate the attachment of the 5S RNA into the large ribosomal subunit, where it forms part of the central protuberance. This Beijerinckia indica subsp. indica (strain ATCC 9039 / DSM 1715 / NCIMB 8712) protein is Large ribosomal subunit protein uL18.